Reading from the N-terminus, the 480-residue chain is Probable serine/threonine-protein phosphatase 2A regulatory subunit B'' subunit TON2 (480 aa).

EF-hand domains follow at residues 186–221 (VSLT…LIPN), 294–329 (TSAQ…TLTE), and 369–404 (DTPE…VHQK). Residues aspartate 307, aspartate 309, serine 311, serine 313, and glutamate 318 each contribute to the Ca(2+) site.

In terms of assembly, interacts with PP2AA1. As to expression, widely expressed.

The protein localises to the cytoplasm. The protein resides in the cytoskeleton. Probable regulatory subunit of type 2A protein phosphatase involved in the control of the dynamic organization of the cortical cytoskeleton. Plays an important role in the organization of interphase microtubule arrays in part through the regulation of nucleation geometry. Required for the reorganization of cortical arrays in response to light. The polypeptide is Probable serine/threonine-protein phosphatase 2A regulatory subunit B'' subunit TON2 (TON2) (Arabidopsis thaliana (Mouse-ear cress)).